The following is a 283-amino-acid chain: Phosphatidylglycerol--prolipoprotein diacylglyceryl transferase (283 aa).

Helical transmembrane passes span 20-40 (LGPV…FVAM), 51-71 (GGNP…GIIG), 97-117 (ITNG…AVYF), and 123-143 (GVAF…AQAI). Residue R145 participates in a 1,2-diacyl-sn-glycero-3-phospho-(1'-sn-glycerol) binding. 2 helical membrane passes run 192–212 (VHPT…VLLW) and 255–275 (INVI…FALR).

This sequence belongs to the Lgt family.

Its subcellular location is the cell membrane. It catalyses the reaction L-cysteinyl-[prolipoprotein] + a 1,2-diacyl-sn-glycero-3-phospho-(1'-sn-glycerol) = an S-1,2-diacyl-sn-glyceryl-L-cysteinyl-[prolipoprotein] + sn-glycerol 1-phosphate + H(+). It participates in protein modification; lipoprotein biosynthesis (diacylglyceryl transfer). Functionally, catalyzes the transfer of the diacylglyceryl group from phosphatidylglycerol to the sulfhydryl group of the N-terminal cysteine of a prolipoprotein, the first step in the formation of mature lipoproteins. This chain is Phosphatidylglycerol--prolipoprotein diacylglyceryl transferase, found in Corynebacterium diphtheriae (strain ATCC 700971 / NCTC 13129 / Biotype gravis).